Consider the following 201-residue polypeptide: Large ribosomal subunit protein uL4 (201 aa).

The segment at 44–71 (RAQKTRAEVSGSGKKPWRQKGTGRARSG) is disordered.

It belongs to the universal ribosomal protein uL4 family. As to quaternary structure, part of the 50S ribosomal subunit.

Its function is as follows. One of the primary rRNA binding proteins, this protein initially binds near the 5'-end of the 23S rRNA. It is important during the early stages of 50S assembly. It makes multiple contacts with different domains of the 23S rRNA in the assembled 50S subunit and ribosome. Functionally, forms part of the polypeptide exit tunnel. This chain is Large ribosomal subunit protein uL4, found in Proteus mirabilis (strain HI4320).